The chain runs to 168 residues: Photosystem I assembly protein Ycf3 (168 aa).

TPR repeat units follow at residues 35-68 (AFTYYRDRMSAQSEGNYAEALQNYYEAMRLEIDP), 72-105 (SYILYNIGLIHTSNGEHMKALEYYFRALERNPFL), and 120-153 (GEQAIQQGDSEIAGAWFDQAAEYWKQALALTPGN).

It belongs to the Ycf3 family.

It localises to the plastid membrane. Its function is as follows. Essential for the assembly of the photosystem I (PSI) complex. May act as a chaperone-like factor to guide the assembly of the PSI subunits. This chain is Photosystem I assembly protein Ycf3, found in Cuscuta reflexa (Southern Asian dodder).